The primary structure comprises 213 residues: Probable nicotinate-nucleotide adenylyltransferase (213 aa).

It belongs to the NadD family.

The catalysed reaction is nicotinate beta-D-ribonucleotide + ATP + H(+) = deamido-NAD(+) + diphosphate. It participates in cofactor biosynthesis; NAD(+) biosynthesis; deamido-NAD(+) from nicotinate D-ribonucleotide: step 1/1. Its function is as follows. Catalyzes the reversible adenylation of nicotinate mononucleotide (NaMN) to nicotinic acid adenine dinucleotide (NaAD). The sequence is that of Probable nicotinate-nucleotide adenylyltransferase from Salmonella gallinarum (strain 287/91 / NCTC 13346).